A 470-amino-acid polypeptide reads, in one-letter code: Protein escargot (470 aa).

The segment at 271-309 (LNLNTSQPGEQAAAKTGDMSPETMPNASAKKDKNQPPRY) is disordered. 4 consecutive C2H2-type zinc fingers follow at residues 309–331 (YQCP…QQFH), 344–366 (FSCK…IRTH), 370–392 (CKCN…IRTH), and 398–420 (FSCQ…LQTH). A C2H2-type 5; atypical zinc finger spans residues 426-449 (YSCTSCSKTFSRMSLLTKHSEGGC). The segment at 448 to 470 (GCPGGSAGSSSSSELNYAGYAEP) is disordered.

Belongs to the snail C2H2-type zinc-finger protein family. In terms of tissue distribution, expression is complex and dynamic. In early embryogenesis, expression begins on the dorsal side of the embryo. Expressed in a pattern of longitudinal stripes early in germband elongation. Later in embryogenesis, expression is in cells that correspond to the wing, haltere, leg and genital imaginal disks and the abdominal histoblasts. In the embryonic leg disk, expression is restricted to imaginal cells. Also expressed in the central nervous system (CNS), tracheae and head of stage 14 embryos. CNS and tracheal expression decays during later stages, though head expression persists until late in embryogenesis. In third instar larvae, expression is seen in the brain and in regions of many imaginal tissues including the eye-antennal, wing, leg and haltere disks. Expressed in embryonic, larval and adult male germline stem cells and in the somatic cells of the embryonic gonads.

The protein resides in the nucleus. Transcription factor that can both stimulate and repress transcription. Binds to the consensus DNA sequence 5'-A/GCAGGTG-3'. Regulates cell motility and adhesion during tracheal morphogenesis by stimulating transcription of the DE-cadherin gene shg at branch tips, thereby promoting tracheal tube fusion. Maintains diploidy in imaginal cells by inhibiting the transcription of genes required for endoreplication. Required for development of the genital disk and acts as an intrinsic determinant of wing cell fate. The somatic protein is required for maintenance of male germ cells. Acts with other members of the snail protein family to control embryonic central nervous system development. The sequence is that of Protein escargot (esg) from Drosophila melanogaster (Fruit fly).